A 232-amino-acid chain; its full sequence is Glutathione S-transferase E14 (232 aa).

In terms of domain architecture, GST N-terminal spans 4–85 (PKPILYYDER…HLAEKFDEGG (82 aa)). The GST C-terminal domain maps to 91-218 (EHAERMKVLN…RQTMESVGSF (128 aa)).

This sequence belongs to the GST superfamily. Epsilon family. Expressed in the adult ovary (at protein level).

The enzyme catalyses RX + glutathione = an S-substituted glutathione + a halide anion + H(+). Functionally, conjugation of reduced glutathione to a wide number of exogenous and endogenous hydrophobic electrophiles. Essential for ecdysteroid biosynthesis. May be involved in detoxification. The polypeptide is Glutathione S-transferase E14 (Drosophila melanogaster (Fruit fly)).